The primary structure comprises 84 residues: Cell division topological specificity factor (84 aa).

The protein belongs to the MinE family.

Prevents the cell division inhibition by proteins MinC and MinD at internal division sites while permitting inhibition at polar sites. This ensures cell division at the proper site by restricting the formation of a division septum at the midpoint of the long axis of the cell. The polypeptide is Cell division topological specificity factor (Pseudomonas entomophila (strain L48)).